Here is a 78-residue protein sequence, read N- to C-terminus: Antimicrobial peptide marcin-18 (78 aa).

Residues 1-23 form the signal peptide; the sequence is MQFKKQLMVIFLAYFLVVNESEA. Arg41 is modified (arginine amide). Residues 42–78 constitute a propeptide that is removed on maturation; the sequence is RKNQRSRSIMKRDLENLFDPYQRNLELDRLLKQLPNY.

This sequence belongs to the non-disulfide-bridged peptide (NDBP) superfamily. Medium-length antimicrobial peptide (group 3) family. In terms of tissue distribution, expressed by the venom gland.

The protein localises to the secreted. The protein resides in the target cell membrane. Functionally, antimicrobial peptide with potent activity against bacteria. Acts by fastly disrupting the bacterial membrane. Shows activity against Gram-positive bacteria S.aureus (MIC=1.5-2.9 uM) and S.epidermidis (MIC=2.9 uM), M.luteus (MIC=23.4 uM), B.thuringiensis (MIC=2.9 uM), B.subtilis (MIC=2.9 uM) and Gram-negative bacteria E.coli (MIC=5.9-11.7 uM) and P.aeruginosa (MIC=5.9 uM), as well as against penicillin (MIC=2.9 uM) and methicillin (MIC=1.5-2.9 uM) resistant bacteria. Antibiotic activity is not affected by major negatively charged components of the prokaryotic cell wall (e.g. lipopolysaccharides and lipoteichoic acid). In vivo, in a mouse model of lethal peritonitis, shows potent antibiotic activity without cytotoxicity, improving the survival rate. The polypeptide is Antimicrobial peptide marcin-18 (Olivierus martensii (Manchurian scorpion)).